Consider the following 644-residue polypeptide: Chaperone protein DnaK (644 aa).

Phosphothreonine; by autocatalysis is present on Thr199. The tract at residues Lys605–Lys644 is disordered. Residues Glu609–Thr623 are compositionally biased toward polar residues. Acidic residues predominate over residues Gly629–Lys644.

Belongs to the heat shock protein 70 family.

In terms of biological role, acts as a chaperone. The protein is Chaperone protein DnaK of Legionella pneumophila (strain Paris).